The following is a 297-amino-acid chain: Inactive beta selinene synthase (297 aa).

It belongs to the terpene synthase family. As to quaternary structure, monomer.

Its subcellular location is the cytoplasm. Functionally, inactive selinene synthase. The protein is Inactive beta selinene synthase of Zea mays (Maize).